The primary structure comprises 382 residues: 1-deoxy-D-xylulose 5-phosphate reductoisomerase (382 aa).

NADPH-binding residues include T10, G11, S12, I13, G36, and N122. Residue K123 participates in 1-deoxy-D-xylulose 5-phosphate binding. An NADPH-binding site is contributed by E124. Mn(2+) is bound at residue D148. Positions 149, 150, 174, and 197 each coordinate 1-deoxy-D-xylulose 5-phosphate. Position 150 (E150) interacts with Mn(2+). G203 contacts NADPH. Residues S210, N215, K216, and E219 each contribute to the 1-deoxy-D-xylulose 5-phosphate site. E219 lines the Mn(2+) pocket.

The protein belongs to the DXR family. Mg(2+) serves as cofactor. Mn(2+) is required as a cofactor.

It catalyses the reaction 2-C-methyl-D-erythritol 4-phosphate + NADP(+) = 1-deoxy-D-xylulose 5-phosphate + NADPH + H(+). It functions in the pathway isoprenoid biosynthesis; isopentenyl diphosphate biosynthesis via DXP pathway; isopentenyl diphosphate from 1-deoxy-D-xylulose 5-phosphate: step 1/6. In terms of biological role, catalyzes the NADPH-dependent rearrangement and reduction of 1-deoxy-D-xylulose-5-phosphate (DXP) to 2-C-methyl-D-erythritol 4-phosphate (MEP). This is 1-deoxy-D-xylulose 5-phosphate reductoisomerase from Chlorobium limicola (strain DSM 245 / NBRC 103803 / 6330).